The sequence spans 499 residues: uncharacterized protein (499 aa).

FAD contacts are provided by residues 6–35 (EAVIIGGGPVGFMLASELAIAGVGTCVIER) and 272–282 (YRDGRIFLAGD).

Belongs to the PheA/TfdB FAD monooxygenase family. Requires FAD as cofactor.

This is an uncharacterized protein from Bacillus subtilis (strain 168).